Here is a 38-residue protein sequence, read N- to C-terminus: Potassium channel toxin alpha-KTx 2.21 (38 aa).

3 cysteine pairs are disulfide-bonded: Cys7–Cys29, Cys13–Cys34, and Cys17–Cys36.

In terms of tissue distribution, expressed by the venom gland.

The protein localises to the secreted. Its function is as follows. Inhibits human voltage-gated potassium (Kv) channels Kv1.2/KCNA2 and Kv1.3/KCNA3. Does not block human Kv1.1/KCNA1 at 100nM concentration. In Centruroides bonito (Scorpion), this protein is Potassium channel toxin alpha-KTx 2.21.